A 150-amino-acid chain; its full sequence is Ribosome maturation factor RimP (150 aa).

It belongs to the RimP family.

Its subcellular location is the cytoplasm. Functionally, required for maturation of 30S ribosomal subunits. This chain is Ribosome maturation factor RimP, found in Escherichia coli O9:H4 (strain HS).